Consider the following 426-residue polypeptide: UPF0597 protein CLI_1810 (426 aa).

This sequence belongs to the UPF0597 family.

The protein is UPF0597 protein CLI_1810 of Clostridium botulinum (strain Langeland / NCTC 10281 / Type F).